The chain runs to 385 residues: MAEGKMMSDFLPFSRPAMGAEELAAVKTVLDSGWITTGPKNQELEAAFCRLTGNQYAVAVSSATAGMHIALMALGIGEGDEVITPSMTWVSTLNMIVLLGANPVMVDVDRDTLMVTPEHIEAAITPQTKAIIPVHYAGAPADLDAIYALGERYGIPVIEDAAHATGTSYKGRHIGARGTAIFSFHAIKNITCAEGGIVVTDNPQFADKLRSLKFHGLGVDAWDRQSGGRAPQAEVLAPGYKYNLPDLNAAIALAQLQKLDALNARRAAIAAQYHQAMADLPFQPLSLPSWEHIHAWHLFIIRVDEARCGITRDALMASLKTKGIGTGLHFRAAHTQKYYRERFPTLTLPDTEWNSERICSLPLFPDMTESDFDRVITALHQIAGQ.

The active-site Proton acceptor is Lys-188. Lys-188 is modified (N6-(pyridoxal phosphate)lysine).

This sequence belongs to the DegT/DnrJ/EryC1 family. ArnB subfamily. Homodimer. The cofactor is pyridoxal 5'-phosphate.

The enzyme catalyses UDP-4-amino-4-deoxy-beta-L-arabinose + 2-oxoglutarate = UDP-beta-L-threo-pentopyranos-4-ulose + L-glutamate. Its pathway is nucleotide-sugar biosynthesis; UDP-4-deoxy-4-formamido-beta-L-arabinose biosynthesis; UDP-4-deoxy-4-formamido-beta-L-arabinose from UDP-alpha-D-glucuronate: step 2/3. The protein operates within bacterial outer membrane biogenesis; lipopolysaccharide biosynthesis. With respect to regulation, inhibited by L-cycloserine. In terms of biological role, catalyzes the conversion of UDP-4-keto-arabinose (UDP-Ara4O) to UDP-4-amino-4-deoxy-L-arabinose (UDP-L-Ara4N). The modified arabinose is attached to lipid A and is required for resistance to polymyxin and cationic antimicrobial peptides. The chain is UDP-4-amino-4-deoxy-L-arabinose--oxoglutarate aminotransferase (arnB) from Salmonella typhimurium (strain LT2 / SGSC1412 / ATCC 700720).